A 443-amino-acid chain; its full sequence is Thymidine phosphorylase (443 aa).

This sequence belongs to the thymidine/pyrimidine-nucleoside phosphorylase family. As to quaternary structure, homodimer.

The enzyme catalyses thymidine + phosphate = 2-deoxy-alpha-D-ribose 1-phosphate + thymine. The protein operates within pyrimidine metabolism; dTMP biosynthesis via salvage pathway; dTMP from thymine: step 1/2. The enzymes which catalyze the reversible phosphorolysis of pyrimidine nucleosides are involved in the degradation of these compounds and in their utilization as carbon and energy sources, or in the rescue of pyrimidine bases for nucleotide synthesis. The chain is Thymidine phosphorylase from Shewanella denitrificans (strain OS217 / ATCC BAA-1090 / DSM 15013).